Here is a 632-residue protein sequence, read N- to C-terminus: Probable potassium transport system protein Kup (632 aa).

A run of 12 helical transmembrane segments spans residues 19 to 39, 57 to 77, 111 to 131, 147 to 167, 175 to 195, 213 to 233, 257 to 277, 286 to 306, 347 to 367, 376 to 396, 404 to 424, and 429 to 449; these read LLCL…PLYV, VIGI…LKYV, ILFL…VITP, PLLQ…LFML, IGAL…LVGL, AFAF…AVVL, WYGG…ALLL, PFFL…ATAA, IYIP…VLGF, AYGV…FFVL, FLLG…FFSA, and VAQG…IMIT.

It belongs to the HAK/KUP transporter (TC 2.A.72) family.

Its subcellular location is the cell inner membrane. It catalyses the reaction K(+)(in) + H(+)(in) = K(+)(out) + H(+)(out). Its function is as follows. Transport of potassium into the cell. Likely operates as a K(+):H(+) symporter. This is Probable potassium transport system protein Kup from Nitrosospira multiformis (strain ATCC 25196 / NCIMB 11849 / C 71).